We begin with the raw amino-acid sequence, 313 residues long: Putative glycosyltransferase ORF313 (313 aa).

The protein belongs to the glycosyltransferase group 1 family. Glycosyltransferase 4 subfamily.

This Acidianus hospitalis (AFV-1) protein is Putative glycosyltransferase ORF313.